A 453-amino-acid chain; its full sequence is Charged multivesicular body protein 7 (453 aa).

A disordered region spans residues 1–22 (MWSPEREAEAPAGGDPAGLLPP). Residues 10–22 (APAGGDPAGLLPP) show a composition bias toward low complexity. Phosphoserine is present on serine 232. Residues 243-312 (QLMQSEQLLS…DTVQGILDRI (70 aa)) adopt a coiled-coil conformation. Positions 392-403 (TKEPLDLPDNPR) are enriched in basic and acidic residues. 2 disordered regions span residues 392-417 (TKEP…PRIS) and 431-453 (SEGG…LKPL). A Phosphothreonine modification is found at threonine 408. Phosphoserine occurs at positions 410, 417, 431, and 441.

This sequence belongs to the SNF7 family. In terms of assembly, interacts with CHMP4B, but not with VPS25. Interacts with LEMD2 (via C-terminus).

It is found in the cytoplasm. Its subcellular location is the nucleus envelope. In terms of biological role, ESCRT-III-like protein required to recruit the ESCRT-III complex to the nuclear envelope (NE) during late anaphase. Together with SPAST, the ESCRT-III complex promotes NE sealing and mitotic spindle disassembly during late anaphase. Recruited to the reforming NE during anaphase by LEMD2. Plays a role in the endosomal sorting pathway. This Homo sapiens (Human) protein is Charged multivesicular body protein 7 (CHMP7).